We begin with the raw amino-acid sequence, 126 residues long: MHLSQLLACALLLSLLSLRPSEAKPGAPPKVPRTPPGEEVAEPQAAGGGQKKGDKTPGGGGANLKDDRSRLLRDLRVDTKSRAAWTRLLHEHPNARKYKGGNKKGLSKGCFGLKLDRIGSMSGLGC.

The signal sequence occupies residues Met1–Ala23. The interval Pro20–Leu71 is disordered. A propeptide spanning residues Lys24–Arg73 is cleaved from the precursor. Residues Gly26–Pro35 are compositionally biased toward pro residues. The segment covering Ala46–Ala62 has biased composition (gly residues). The cysteines at positions 110 and 126 are disulfide-linked.

Belongs to the natriuretic peptide family. In terms of processing, degraded by IDE (in vitro).

It localises to the secreted. Hormone which plays a role in endochondral ossification through regulation of cartilaginous growth plate chondrocytes proliferation and differentiation. May also be vasoactive and natriuretic. Acts by specifically binding and stimulating NPR2 to produce cGMP. Binds the clearance receptor NPR3. The sequence is that of C-type natriuretic peptide (NPPC) from Ovis aries (Sheep).